We begin with the raw amino-acid sequence, 495 residues long: Probable serine/threonine-protein kinase DDB_G0292354 (495 aa).

In terms of domain architecture, Protein kinase spans 16-275 (WTVVKKIGQG…PNYVFLQTLL (260 aa)). Residues 22–30 (IGQGAFGEI) and K45 each bind ATP. D136 (proton acceptor) is an active-site residue. The segment at 293–469 (EVQTNSGASS…NGNGSNSQPI (177 aa)) is disordered. Composition is skewed to low complexity over residues 295–333 (QTNSGASSSSSNTTQQQQQQQQQQQQRNLNQSGLNNSSA) and 354–364 (NNSNNNNNNNN). The span at 385–395 (ESNSQIANSSE) shows a compositional bias: polar residues. Over residues 435–466 (SNNNNINNNNNNYNNNNNNNNNSHMNGNGSNS) the composition is skewed to low complexity.

This sequence belongs to the protein kinase superfamily. CK1 Ser/Thr protein kinase family.

The protein is Probable serine/threonine-protein kinase DDB_G0292354 of Dictyostelium discoideum (Social amoeba).